Here is a 108-residue protein sequence, read N- to C-terminus: Vacuolar ATPase assembly integral membrane protein VMA21 (108 aa).

The Cytoplasmic portion of the chain corresponds to 1-34 (MASRRSAAAKKEDFSFEAAATQSAHEAQEGFPSS). The chain crosses the membrane as a helical span at residues 35 to 55 (VIIKLVLVTVAMICAPLGTYF). Topologically, residues 56–68 (GTLNTICGGDSSY) are lumenal. Residues 69 to 89 (AGALAAISVNVVLIIYLIIAA) form a helical membrane-spanning segment. Residues 90 to 108 (REDTGESEEERKGKEGKEE) lie on the Cytoplasmic side of the membrane.

This sequence belongs to the VMA21 family.

The protein resides in the endoplasmic reticulum membrane. Its subcellular location is the endoplasmic reticulum-Golgi intermediate compartment membrane. It localises to the cytoplasmic vesicle. The protein localises to the COPII-coated vesicle membrane. Required for the assembly of the V0 complex of the vacuolar ATPase (V-ATPase) in the endoplasmic reticulum. This Ajellomyces capsulatus (strain NAm1 / WU24) (Darling's disease fungus) protein is Vacuolar ATPase assembly integral membrane protein VMA21.